The primary structure comprises 480 residues: UDP-glycosyltransferase 72B2 (480 aa).

UDP-alpha-D-glucose contacts are provided by residues S277, 347–349 (APQ), 364–372 (HCGWNSTLE), and 386–389 (FAEQ).

Belongs to the UDP-glycosyltransferase family.

This is UDP-glycosyltransferase 72B2 (UGT72B2) from Arabidopsis thaliana (Mouse-ear cress).